We begin with the raw amino-acid sequence, 272 residues long: Indole-3-glycerol phosphate synthase (272 aa).

It belongs to the TrpC family.

It carries out the reaction 1-(2-carboxyphenylamino)-1-deoxy-D-ribulose 5-phosphate + H(+) = (1S,2R)-1-C-(indol-3-yl)glycerol 3-phosphate + CO2 + H2O. Its pathway is amino-acid biosynthesis; L-tryptophan biosynthesis; L-tryptophan from chorismate: step 4/5. This Mycobacterium sp. (strain JLS) protein is Indole-3-glycerol phosphate synthase.